Consider the following 722-residue polypeptide: Probable dipeptidyl-peptidase 5 (722 aa).

A signal peptide spans 1-18 (MGALRWLSLAAAASSALA). N-linked (GlcNAc...) asparagine glycans are attached at residues Asn-75, Asn-78, Asn-86, Asn-94, Asn-151, Asn-253, and Asn-448. Ser-558 serves as the catalytic Charge relay system. An N-linked (GlcNAc...) asparagine glycan is attached at Asn-605. Active-site charge relay system residues include Asp-641 and His-673.

It belongs to the peptidase S9C family.

It localises to the secreted. Extracellular dipeptidyl-peptidase which removes N-terminal dipeptides sequentially from polypeptides having unsubstituted N-termini. This Emericella nidulans (strain FGSC A4 / ATCC 38163 / CBS 112.46 / NRRL 194 / M139) (Aspergillus nidulans) protein is Probable dipeptidyl-peptidase 5 (dpp5).